Reading from the N-terminus, the 196-residue chain is Shikimate kinase (196 aa).

32–37 is an ATP binding site; the sequence is GAGKSA. Ser-36 contributes to the Mg(2+) binding site. Asp-54, Arg-78, and Gly-100 together coordinate substrate. Position 138 (Arg-138) interacts with ATP. Arg-157 contributes to the substrate binding site. Arg-174 contacts ATP.

It belongs to the shikimate kinase family. In terms of assembly, monomer. It depends on Mg(2+) as a cofactor.

It is found in the cytoplasm. The catalysed reaction is shikimate + ATP = 3-phosphoshikimate + ADP + H(+). Its pathway is metabolic intermediate biosynthesis; chorismate biosynthesis; chorismate from D-erythrose 4-phosphate and phosphoenolpyruvate: step 5/7. Its function is as follows. Catalyzes the specific phosphorylation of the 3-hydroxyl group of shikimic acid using ATP as a cosubstrate. The chain is Shikimate kinase from Rhizobium leguminosarum bv. trifolii (strain WSM2304).